We begin with the raw amino-acid sequence, 147 residues long: Transthyretin (147 aa).

The signal sequence occupies residues 1–20 (MASLRLFLLCLAGLVFVSEA). Cys-30 carries the post-translational modification Sulfocysteine. Lys-35 is a binding site for L-thyroxine. Position 62 is a 4-carboxyglutamate (Glu-62). Ser-72 carries the post-translational modification Phosphoserine. Glu-74 is a binding site for L-thyroxine. A glycan (N-linked (GlcNAc...) asparagine) is linked at Asn-118. Ser-137 contacts L-thyroxine.

This sequence belongs to the transthyretin family. In terms of assembly, homotetramer. Dimer of dimers. In the homotetramer, subunits assemble around a central channel that can accommodate two ligand molecules. Interacts with RBP4. Sulfonation of the reactive cysteine Cys-30 enhances the stability of the native conformation of TTR, avoiding misassembly of the protein leading to amyloid formation. Detected in plasma (at protein level). Detected in liver.

It localises to the secreted. Its function is as follows. Thyroid hormone-binding protein. Probably transports thyroxine from the bloodstream to the brain. This chain is Transthyretin (Ttr), found in Mus musculus (Mouse).